The following is a 608-amino-acid chain: MASDAVKYMPIHGGGTTATTAADIKSFFSALKPKKTSTFAYAFVITFVSFTLFFAFSPSPNSSSPWFSNIFTSSSTTTTSDNTSGSQFSSIFSYILPNVTSTKPTNRSSDATDSLSVNATSPPLNSNSKNGTLQTPAPETHTPVAKNTTFESPIVNGTNPDAKNNTSSHPLLSDKSSTTGSNNQSRTTADTETVNRNQTTSPAPSKAPVSVDLKTNSSSNSSTASSTPKKQTKTVDLVSSVKQEIEKWSESLKNCEFFDGEWIKDDSYPLYKPGSCNLIDEQFNCITNGRPDKDFQKLKWKPKKCSLPRLNGAILLEMLRGRRLVFVGDSLNRNMWESLVCILKGSVKDETKVYEARGRHHFRGEAEYSFVFQDYNCTVEFFVSPFLVQEWEIVDKKGTKKETLRLDLVGKSSEQYKGADVIVFNTGHWWTHEKTSKGEDYYQEGSNVYHELAVLEAFRKALTTWGRWVEKNVNPAKSLVFFRGYSASHFSGGQWNSGGACDSETEPIKNDTYLTPYPSKMKVLEKVLRGMKTPVTYLNITRLTDYRKDGHPSVYRKQSLSEKEKKSPLLYQDCSHWCLPGVPDSWNEILYAELIVKLNQLSQTQRKT.

A helical; Signal-anchor for type II membrane protein transmembrane segment spans residues 38–58 (TFAYAFVITFVSFTLFFAFSP). Polar residues-rich tracts occupy residues 101-137 (STKP…QTPA) and 145-203 (AKNT…TSPA). The disordered stretch occupies residues 101-236 (STKPTNRSSD…TPKKQTKTVD (136 aa)). Over residues 215-227 (TNSSSNSSTASST) the composition is skewed to low complexity. The short motif at 328–330 (GDS) is the GDS motif element. Residues 573–587 (DCSHWCLPGVPDSWN) carry the DCXHWCLPGXXDXWN motif motif.

This sequence belongs to the PC-esterase family. TBL subfamily. Expressed in leaf vasculature, growing part of the root, expanding inflorescence stems and trichomes.

The protein resides in the membrane. In terms of biological role, required during cellulose deposition. May act as a bridging protein that binds pectin and other cell wall polysaccharides. Probably involved in maintaining esterification of pectins. May be involved in the specific O-acetylation of cell wall polymers. This is Protein trichome birefringence (TBR) from Arabidopsis thaliana (Mouse-ear cress).